Consider the following 197-residue polypeptide: DnaJ homolog subfamily C member 5 (197 aa).

Residues 13–82 enclose the J domain; that stretch reads GESLYHVLGL…RNIYDKYGSL (70 aa). Residues 153-197 are disordered; sequence EDLEAQMQSDERDTEGPVLVQPASATETTQLTSDSHASYHTDGFN. A compositionally biased stretch (polar residues) spans 175–197; sequence ASATETTQLTSDSHASYHTDGFN.

Palmitoylated. Palmitoylation occurs probably in the cysteine-rich domain and regulates DNAJC5 stable membrane attachment.

It is found in the cytoplasm. Its subcellular location is the cytosol. The protein localises to the membrane. It localises to the cytoplasmic vesicle. The protein resides in the secretory vesicle. It is found in the chromaffin granule membrane. Its subcellular location is the melanosome. The protein localises to the cell membrane. Its function is as follows. May have an important role in presynaptic function. May be involved in calcium-dependent neurotransmitter release at nerve endings. The chain is DnaJ homolog subfamily C member 5 from Xenopus laevis (African clawed frog).